The sequence spans 310 residues: Mitogen-activated protein kinase kinase 9 (310 aa).

Residues 47–306 (LEKLNVLGCG…APQLLAHPFL (260 aa)) form the Protein kinase domain. ATP is bound by residues 53 to 61 (LGCGNGGIV) and Lys76. The active-site Proton acceptor is Asp167. A phosphoserine mark is found at Ser195 and Ser201. Phosphothreonine is present on Thr205.

Belongs to the protein kinase superfamily. STE Ser/Thr protein kinase family. MAP kinase kinase subfamily. In terms of processing, phosphorylation at Ser-195 and Ser-201 by MAP kinase kinase kinases positively regulates kinase activity. Autophosphorylated.

The protein resides in the cytoplasm. It localises to the nucleus. It carries out the reaction L-seryl-[protein] + ATP = O-phospho-L-seryl-[protein] + ADP + H(+). The catalysed reaction is L-threonyl-[protein] + ATP = O-phospho-L-threonyl-[protein] + ADP + H(+). The enzyme catalyses L-tyrosyl-[protein] + ATP = O-phospho-L-tyrosyl-[protein] + ADP + H(+). Its function is as follows. MKK9-MPK3/MPK6 module phosphorylates and activates EIN3, leading to the promotion of EIN3-mediated transcription in ethylene signaling. Autophosphorylates and also phosphorylates MPK3 and MPK6. Plays an important role in ethylene and camalexin biosynthesis and in salt stress response. MKK9-MPK6 module positively regulates leaf senescence. This is Mitogen-activated protein kinase kinase 9 (MKK9) from Arabidopsis thaliana (Mouse-ear cress).